A 465-amino-acid polypeptide reads, in one-letter code: UDP-N-acetylmuramate--L-alanine ligase (465 aa).

Position 112 to 118 (112 to 118 (GTHGKTT)) interacts with ATP.

This sequence belongs to the MurCDEF family.

Its subcellular location is the cytoplasm. The catalysed reaction is UDP-N-acetyl-alpha-D-muramate + L-alanine + ATP = UDP-N-acetyl-alpha-D-muramoyl-L-alanine + ADP + phosphate + H(+). It functions in the pathway cell wall biogenesis; peptidoglycan biosynthesis. Its function is as follows. Cell wall formation. This is UDP-N-acetylmuramate--L-alanine ligase from Burkholderia mallei (strain NCTC 10247).